A 189-amino-acid chain; its full sequence is uncharacterized protein (189 aa).

Helical transmembrane passes span 2–22 (LVVV…HHLL), 93–113 (ILFY…YFIL), and 116–136 (FYST…LHTL).

It is found in the membrane. This is an uncharacterized protein from Schizosaccharomyces pombe (strain 972 / ATCC 24843) (Fission yeast).